A 134-amino-acid polypeptide reads, in one-letter code: ATP synthase epsilon chain (134 aa).

Belongs to the ATPase epsilon chain family. F-type ATPases have 2 components, CF(1) - the catalytic core - and CF(0) - the membrane proton channel. CF(1) has five subunits: alpha(3), beta(3), gamma(1), delta(1), epsilon(1). CF(0) has three main subunits: a, b and c.

The protein resides in the cellular thylakoid membrane. Functionally, produces ATP from ADP in the presence of a proton gradient across the membrane. This Prochlorococcus marinus (strain MIT 9312) protein is ATP synthase epsilon chain.